The primary structure comprises 346 residues: Methionine import ATP-binding protein MetN 1 (346 aa).

Residues 2–241 enclose the ABC transporter domain; sequence IELKNVSKVF…PQHVTTKKFV (240 aa). ATP is bound at residue 38–45; it reads GYSGAGKS.

Belongs to the ABC transporter superfamily. Methionine importer (TC 3.A.1.24) family. As to quaternary structure, the complex is composed of two ATP-binding proteins (MetN), two transmembrane proteins (MetI) and a solute-binding protein (MetQ).

The protein localises to the cell membrane. It carries out the reaction L-methionine(out) + ATP + H2O = L-methionine(in) + ADP + phosphate + H(+). The enzyme catalyses D-methionine(out) + ATP + H2O = D-methionine(in) + ADP + phosphate + H(+). Part of the ABC transporter complex MetNIQ involved in methionine import. Responsible for energy coupling to the transport system. The protein is Methionine import ATP-binding protein MetN 1 of Bacillus cereus (strain ATCC 10987 / NRS 248).